The chain runs to 222 residues: ATP synthase F(0) complex subunit a (222 aa).

A run of 6 helical transmembrane segments spans residues 7–27 (AFFDVPVGTMMLAIAFPAILL), 64–84 (WSLMLITLTLFIGLTNLLGLL), 93–113 (QLTVNLSMAIPLWTGTVILGF), 132–152 (FLIPMIIIIETISLLIRPVTL), 160–180 (ITAGHLLIHLTGTAALTLLSI), and 185–205 (ITVTFITVVVLTILELAVALI).

The protein belongs to the ATPase A chain family. Component of the ATP synthase complex composed at least of ATP5F1A/subunit alpha, ATP5F1B/subunit beta, ATP5MC1/subunit c (homooctomer), MT-ATP6/subunit a, MT-ATP8/subunit 8, ATP5ME/subunit e, ATP5MF/subunit f, ATP5MG/subunit g, ATP5MK/subunit k, ATP5MJ/subunit j, ATP5F1C/subunit gamma, ATP5F1D/subunit delta, ATP5F1E/subunit epsilon, ATP5PF/subunit F6, ATP5PB/subunit b, ATP5PD/subunit d, ATP5PO/subunit OSCP. ATP synthase complex consists of a soluble F(1) head domain (subunits alpha(3) and beta(3)) - the catalytic core - and a membrane F(0) domain - the membrane proton channel (subunits c, a, 8, e, f, g, k and j). These two domains are linked by a central stalk (subunits gamma, delta, and epsilon) rotating inside the F1 region and a stationary peripheral stalk (subunits F6, b, d, and OSCP). Interacts with DNAJC30; interaction is direct.

The protein localises to the mitochondrion inner membrane. It carries out the reaction H(+)(in) = H(+)(out). In terms of biological role, subunit a, of the mitochondrial membrane ATP synthase complex (F(1)F(0) ATP synthase or Complex V) that produces ATP from ADP in the presence of a proton gradient across the membrane which is generated by electron transport complexes of the respiratory chain. ATP synthase complex consist of a soluble F(1) head domain - the catalytic core - and a membrane F(1) domain - the membrane proton channel. These two domains are linked by a central stalk rotating inside the F(1) region and a stationary peripheral stalk. During catalysis, ATP synthesis in the catalytic domain of F(1) is coupled via a rotary mechanism of the central stalk subunits to proton translocation. With the subunit c (ATP5MC1), forms the proton-conducting channel in the F(0) domain, that contains two crucial half-channels (inlet and outlet) that facilitate proton movement from the mitochondrial intermembrane space (IMS) into the matrix. Protons are taken up via the inlet half-channel and released through the outlet half-channel, following a Grotthuss mechanism. The sequence is that of ATP synthase F(0) complex subunit a from Mammuthus primigenius (Siberian woolly mammoth).